A 518-amino-acid polypeptide reads, in one-letter code: Tropomyosin-1, isoforms 33/34 (518 aa).

Positions 14–267 form a coiled coil; that stretch reads DKDGALERAL…DDLIVEKERY (254 aa). 2 disordered regions span residues 101 to 125 and 288 to 518; these read RSEERLGSATAKLSEASQAADESER and FWNP…APPA. Pro residues predominate over residues 293–305; the sequence is NPKPPTPKLPTPT. Over residues 318–348 the composition is skewed to low complexity; it reads AAEAAAAAEAEAAEAAAAAGEAGPDGAPAAP. 2 stretches are compositionally biased toward pro residues: residues 357 to 374 and 394 to 405; these read EPTPPKEPTPPPPPPPPF and EPPPPGSEPEPV. Low complexity predominate over residues 406–518; it reads PAAEGEAAPA…AAAEGEAPPA (113 aa).

It belongs to the tropomyosin family. In terms of assembly, homodimer. As to expression, both isoforms are only expressed in indirect flight muscles.

Its subcellular location is the cytoplasm. The protein localises to the cytoskeleton. Functionally, tropomyosin, in association with the troponin complex, plays a central role in the calcium dependent regulation of muscle contraction. This chain is Tropomyosin-1, isoforms 33/34 (Tm1), found in Drosophila melanogaster (Fruit fly).